The sequence spans 241 residues: Uridylate kinase (241 aa).

Residue 12-15 (KLSG) coordinates ATP. A UMP-binding site is contributed by glycine 54. ATP is bound by residues glycine 55 and arginine 59. UMP is bound by residues aspartate 74 and 135-142 (VGAPYFTT). ATP contacts are provided by threonine 162, tyrosine 168, and aspartate 171.

Belongs to the UMP kinase family. Homohexamer.

The protein localises to the cytoplasm. It catalyses the reaction UMP + ATP = UDP + ADP. It functions in the pathway pyrimidine metabolism; CTP biosynthesis via de novo pathway; UDP from UMP (UMPK route): step 1/1. With respect to regulation, inhibited by UTP. Functionally, catalyzes the reversible phosphorylation of UMP to UDP. The chain is Uridylate kinase from Sphingopyxis alaskensis (strain DSM 13593 / LMG 18877 / RB2256) (Sphingomonas alaskensis).